Reading from the N-terminus, the 266-residue chain is 2-dehydro-3-deoxy-D-gluconate/2-dehydro-3-deoxy-phosphogluconate aldolase (266 aa).

Residues 36 to 37 (ST), 123 to 125 (YNI), and 151 to 153 (KDS) contribute to the substrate site. The active-site Schiff-base intermediate with substrate is lysine 151.

It belongs to the DapA family. KDPG aldolase subfamily. In terms of assembly, homotetramer; dimer of dimers.

It carries out the reaction 2-dehydro-3-deoxy-6-phospho-D-gluconate = D-glyceraldehyde 3-phosphate + pyruvate. The enzyme catalyses 2-dehydro-3-deoxy-D-gluconate = D-glyceraldehyde + pyruvate. It catalyses the reaction 2-dehydro-3-deoxy-6-phospho-D-galactonate = D-glyceraldehyde 3-phosphate + pyruvate. The catalysed reaction is 2-dehydro-3-deoxy-D-galactonate = D-glyceraldehyde + pyruvate. The protein operates within carbohydrate acid metabolism; 2-dehydro-3-deoxy-D-gluconate degradation; D-glyceraldehyde 3-phosphate and pyruvate from 2-dehydro-3-deoxy-D-gluconate: step 2/2. In terms of biological role, involved in the degradation of glucose via the Entner-Doudoroff pathway. Catalyzes the reversible cleavage of 2-keto-3-deoxy-6-phosphogluconate (KDPG) and 2-keto-3-deoxygluconate (KDG) forming pyruvate and glyceraldehyde 3-phosphate or glyceraldehyde, respectively. It is also able to catalyze the reversible cleavage of 2-keto-3-deoxy-6-phosphogalactonate (KDPGal) and 2-keto-3-deoxygalactonate (KDGal). It is equally active with both D- and L-glyceraldehyde. This is 2-dehydro-3-deoxy-D-gluconate/2-dehydro-3-deoxy-phosphogluconate aldolase from Picrophilus torridus (strain ATCC 700027 / DSM 9790 / JCM 10055 / NBRC 100828 / KAW 2/3).